Reading from the N-terminus, the 285-residue chain is Acetyl-coenzyme A carboxylase carboxyl transferase subunit beta (285 aa).

The CoA carboxyltransferase N-terminal domain maps to 29–285 (IMTKCPNCKK…ILKIHQEVSN (257 aa)). Zn(2+) contacts are provided by Cys33, Cys36, Cys52, and Cys55. The C4-type zinc finger occupies 33 to 55 (CPNCKKIMYTKELNENLNVCFNC).

It belongs to the AccD/PCCB family. As to quaternary structure, acetyl-CoA carboxylase is a heterohexamer composed of biotin carboxyl carrier protein (AccB), biotin carboxylase (AccC) and two subunits each of ACCase subunit alpha (AccA) and ACCase subunit beta (AccD). Zn(2+) is required as a cofactor.

The protein localises to the cytoplasm. The enzyme catalyses N(6)-carboxybiotinyl-L-lysyl-[protein] + acetyl-CoA = N(6)-biotinyl-L-lysyl-[protein] + malonyl-CoA. It participates in lipid metabolism; malonyl-CoA biosynthesis; malonyl-CoA from acetyl-CoA: step 1/1. In terms of biological role, component of the acetyl coenzyme A carboxylase (ACC) complex. Biotin carboxylase (BC) catalyzes the carboxylation of biotin on its carrier protein (BCCP) and then the CO(2) group is transferred by the transcarboxylase to acetyl-CoA to form malonyl-CoA. The sequence is that of Acetyl-coenzyme A carboxylase carboxyl transferase subunit beta from Staphylococcus epidermidis (strain ATCC 35984 / DSM 28319 / BCRC 17069 / CCUG 31568 / BM 3577 / RP62A).